The following is a 421-amino-acid chain: D-amino acid dehydrogenase (421 aa).

4–18 (VLVLGSGVVGLTSAW) contributes to the FAD binding site.

It belongs to the DadA oxidoreductase family. Requires FAD as cofactor.

It carries out the reaction a D-alpha-amino acid + A + H2O = a 2-oxocarboxylate + AH2 + NH4(+). Oxidative deamination of D-amino acids. This chain is D-amino acid dehydrogenase, found in Vibrio cholerae serotype O1 (strain ATCC 39315 / El Tor Inaba N16961).